The following is a 466-amino-acid chain: Asparagine--tRNA ligase (466 aa).

It belongs to the class-II aminoacyl-tRNA synthetase family. Homodimer.

It is found in the cytoplasm. The catalysed reaction is tRNA(Asn) + L-asparagine + ATP = L-asparaginyl-tRNA(Asn) + AMP + diphosphate + H(+). The sequence is that of Asparagine--tRNA ligase from Shewanella sp. (strain MR-7).